The primary structure comprises 319 residues: Transaldolase (319 aa).

The active-site Schiff-base intermediate with substrate is the Lys-131.

The protein belongs to the transaldolase family. Type 1 subfamily. In terms of assembly, homodimer.

It is found in the cytoplasm. The enzyme catalyses D-sedoheptulose 7-phosphate + D-glyceraldehyde 3-phosphate = D-erythrose 4-phosphate + beta-D-fructose 6-phosphate. The protein operates within carbohydrate degradation; pentose phosphate pathway; D-glyceraldehyde 3-phosphate and beta-D-fructose 6-phosphate from D-ribose 5-phosphate and D-xylulose 5-phosphate (non-oxidative stage): step 2/3. Functionally, transaldolase is important for the balance of metabolites in the pentose-phosphate pathway. In Wigglesworthia glossinidia brevipalpis, this protein is Transaldolase.